The primary structure comprises 179 residues: MSLKQRYRETIQGKLLTELSFSNIHEVPKVTKITVNRGLGEAAQNAKFLEASITELSNITGQKVLVTRAKKAIAGFKIRQGMPIGVAVTLRGDRMYSFLERLINLALPRIRDFRGVSPKSFDGRGNYTLGVKEQIIFPEISYDKIDAIRGMDITIVTNARNDEEGRALLREMGMPFRSN.

This sequence belongs to the universal ribosomal protein uL5 family. In terms of assembly, part of the 50S ribosomal subunit; contacts the 5S rRNA.

Its subcellular location is the plastid. It localises to the organellar chromatophore. Functionally, binds 5S rRNA, forms part of the central protuberance of the 50S subunit. The sequence is that of Large ribosomal subunit protein uL5c (rpl5) from Paulinella chromatophora.